Consider the following 215-residue polypeptide: Thymidylate kinase (215 aa).

11-18 (GIDGAGKS) is an ATP binding site.

This sequence belongs to the thymidylate kinase family.

The enzyme catalyses dTMP + ATP = dTDP + ADP. Functionally, phosphorylation of dTMP to form dTDP in both de novo and salvage pathways of dTTP synthesis. This is Thymidylate kinase from Nitrosomonas eutropha (strain DSM 101675 / C91 / Nm57).